An 845-amino-acid polypeptide reads, in one-letter code: MSENNNDKITVKKTLTLKRSVLETSTVKQNFSHGRTKAVVVETKRRKITRTDEKAETSQPITKPHVAPQRSKPRFEEAKPSESSMAKSNLSSAEMEARLRALEEAHIQERITREKVEEQARRIKEREESLRQAVQETEIHQEEQKEEKNPPVQTSPLSSAHSSIEPIDIAITPKNITVTEKRKADEIKNDDRHSRRANPAKSEVRTPKVVKGANERRRGKLTLNSALDEEGSVRGRSMAAMRRRQEKFKRAQNQEPKEKISREVVIPETITIQELAQRMAERSVDVIKFLMKQEQMMKPGDVIDADVAELIAVEFGHTVKRVLESDVEEGIFNIADNPQKMQPRPPVVTIMGHVDHGKTSLLDAIRKANVVSGEAGGITQHIGAYQVEQNGQKITFIDTPGHAAFTAMRARGARVTDIAVLVVAADDSVMPQTVESINHAKAAGVPIIVAINKIDKPAADAQKVRTELLQHEVFVETMGGETLEVEVSAKTGQNLVKLLEAILLQAELLDLKADPKRTAEGVVIEAKLDRGRGSVATVLVQKGTLHPSDIIVAGNEWGRVRALIDDHGRHVKEAVPSTPIEILGMQGTPQAGDRFAVVTHEAKAREIAEYRQRLARDKAVARQTGSRSSLEQMMTKLQTTGIKEFPLIVKGDVQGSIEAIASALEKLGNEEVRARIVHSGAGGITESDISLAEASNSAVIGFNVRANKQACALAKTQGIEIRYYNIIYDLVDDIKAAMSGLLSPEQRETFLGNAEILEVFNITKIGKVAGCRVIEGKIERGAGVRLIRDNIVIHEGKLKTLKRFKDEVNEVQSGQECGIAFENYEDIRAGDTIEIFRIEHINRTL.

2 disordered regions span residues 45 to 91 (RRKI…SNLS) and 127 to 209 (EESL…TPKV). A compositionally biased stretch (polar residues) spans 81 to 91 (SESSMAKSNLS). Over residues 137–149 (TEIHQEEQKEEKN) the composition is skewed to basic and acidic residues. The segment covering 151-162 (PVQTSPLSSAHS) has biased composition (polar residues). Basic and acidic residues predominate over residues 179-193 (TEKRKADEIKNDDRH). The tr-type G domain occupies 343 to 512 (PRPPVVTIMG…LLQAELLDLK (170 aa)). Positions 352-359 (GHVDHGKT) are G1. 352-359 (GHVDHGKT) serves as a coordination point for GTP. Positions 377–381 (GITQH) are G2. Residues 398-401 (DTPG) are G3. Residues 398 to 402 (DTPGH) and 452 to 455 (NKID) each bind GTP. The interval 452-455 (NKID) is G4. Residues 488–490 (SAK) form a G5 region.

The protein belongs to the TRAFAC class translation factor GTPase superfamily. Classic translation factor GTPase family. IF-2 subfamily.

The protein resides in the cytoplasm. In terms of biological role, one of the essential components for the initiation of protein synthesis. Protects formylmethionyl-tRNA from spontaneous hydrolysis and promotes its binding to the 30S ribosomal subunits. Also involved in the hydrolysis of GTP during the formation of the 70S ribosomal complex. This is Translation initiation factor IF-2 from Bartonella quintana (strain Toulouse) (Rochalimaea quintana).